The primary structure comprises 611 residues: Elongation factor 1 alpha-like protein (611 aa).

Disordered regions lie at residues 1–21 and 105–138; these read MAYS…DEGE and SISQ…DEKT. Phosphoserine is present on Ser124. Basic and acidic residues predominate over residues 126-138; that stretch reads GERNGEEANDEKT. Residues 165–390 form the tr-type G domain; sequence LPHLSFVVLG…LENAAFKISK (226 aa). Residues 174–181 are G1; that stretch reads GHVDAGKS. GTP is bound at residue 174-181; the sequence is GHVDAGKS. The interval 230-234 is G2; that stretch reads GVTVS. The interval 251 to 254 is G3; that stretch reads DAPG. GTP is bound by residues 313–316 and 352–354; these read NKMD and SGF. The interval 313-316 is G4; the sequence is NKMD. The segment at 352–354 is G5; that stretch reads SGF.

Belongs to the TRAFAC class translation factor GTPase superfamily. Classic translation factor GTPase family. In terms of assembly, component of the Dom34-Hbs1 complex, also named Pelota-HBS1L complex, composed of DOM34 and HBS1.

The protein localises to the cytoplasm. The catalysed reaction is GTP + H2O = GDP + phosphate + H(+). In terms of biological role, GTPase component of the Dom34-Hbs1 complex, a complex that recognizes stalled ribosomes and triggers the No-Go Decay (NGD) pathway. The Dom34-Hbs1 complex recognizes ribosomes stalled at the 3' end of an mRNA and engages stalled ribosomes by destabilizing mRNA in the mRNA channel. Following ribosome-binding, the Pelota-HBS1L complex promotes the disassembly of stalled ribosomes, followed by degradation of damaged mRNAs as part of the NGD pathway. The Dom34-Hbs1 complex is also involved in non-functional rRNA decay. The chain is Elongation factor 1 alpha-like protein from Saccharomyces cerevisiae (strain ATCC 204508 / S288c) (Baker's yeast).